A 281-amino-acid chain; its full sequence is ATP synthase gamma chain (281 aa).

Belongs to the ATPase gamma chain family. In terms of assembly, F-type ATPases have 2 components, CF(1) - the catalytic core - and CF(0) - the membrane proton channel. CF(1) has five subunits: alpha(3), beta(3), gamma(1), delta(1), epsilon(1). CF(0) has three main subunits: a, b and c.

The protein localises to the cell membrane. Its function is as follows. Produces ATP from ADP in the presence of a proton gradient across the membrane. The gamma chain is believed to be important in regulating ATPase activity and the flow of protons through the CF(0) complex. This Clostridium pasteurianum protein is ATP synthase gamma chain.